The primary structure comprises 969 residues: Defective in germ line development protein 3 (969 aa).

The interval 34 to 81 is gld-2-binding; sequence MAENAASARKLFVSSALKDIIVNPENFYHDFQQSAQMAEDANQRRQVS. 5 KH domains span residues 34–109, 113–187, 189–259, 270–342, and 344–419; these read MAEN…MIEI, RVTL…MRRN, HFTV…NEIL, FTLH…IMDL, and PISM…YQKV. A gls-1-binding region spans residues 57-471; it reads PENFYHDFQQ…GSNGRRHRSS (415 aa). Disordered regions lie at residues 459–508 and 602–711; these read LSDG…SFSE and EQHR…GDIH. Polar residues predominate over residues 487 to 508; that stretch reads KQFSESSGGPSRSHTRVSSFSE. Residues 631–644 are compositionally biased toward low complexity; that stretch reads PSSSTGSYYPSTTP. Positions 647-659 are enriched in basic and acidic residues; it reads RVYEQVREDDLRS. A compositionally biased stretch (polar residues) spans 664-676; it reads RRTSVNGDDQNVE. 2 stretches are compositionally biased toward basic and acidic residues: residues 677–687 and 694–711; these read SMHDQGYERQY and LQKD…GDIH. The segment at 769–969 is gls-1-binding; it reads LYMHESPHND…DLSLDETSTY (201 aa). The fbf-1-binding stretch occupies residues 860–949; the sequence is NGVTKTILEP…VLNEKEKEIA (90 aa). The tract at residues 950 to 969 is disordered; that stretch reads DKSIESTVTQDLSLDETSTY. A compositionally biased stretch (polar residues) spans 954-969; the sequence is ESTVTQDLSLDETSTY.

Interacts (via its KH1 domain) with gld-2. Isoform A but not isoform B interacts specifically with fbf-1 and fbf-2 in an RNA-independent manner. Isoform A interacts with gls-1 isoform C. In terms of tissue distribution, expressed in the germline (at protein level). In adult hermaphrodites, first detected in the transition zone (TZ), weakly expressed in the early mitotic region and in pachytene germ cells, and becomes more abundantly expressed as germ cells enter diakinesis (at protein level). Expressed in primary spermatocytes, but not in secondary spermatocytes or adult sperm (at protein level).

It localises to the cytoplasm. The protein resides in the cytoplasmic granule. Its subcellular location is the perinuclear region. Required maternally for germline survival and embryogenesis. Forms a complex with gls-1 which promotes the oogenic cell fate by freeing the translational repressor fbf to repress sperm promoting factors. Promotes maturation of primary spermatocytes to mature sperm. Required during hermaphrodite development to promote sperm fate, which is critical for determining the normal number of sperm. Promotion of sperm fate is at the expense of oogenesis, possibly through the negative regulation of fbf. Required during male development for the continued production of sperm and inhibition of oogenesis. Together with gld-2, promotes the transition from mitosis to meiosis. Required for polyadenylation of neg-1 mRNA during embryogenesis. This Caenorhabditis elegans protein is Defective in germ line development protein 3.